We begin with the raw amino-acid sequence, 656 residues long: Pyoverdine export ATP-binding/permease protein PvdT (656 aa).

The ABC transporter domain maps to 6-245; the sequence is IDLRGIRKSY…SANPAALQAV (240 aa). Residue 43–50 participates in ATP binding; that stretch reads GASGSGKS. 4 helical membrane-spanning segments follow: residues 284–304, 538–558, 589–609, and 619–639; these read ALTLLGIVIGVASVVVMLAVG, IAAISLLVGGIGVMNIMLMTV, LSVVGGLAGIVLALAMGAALL, and LSAVIGAFACALVTGVIFGFM.

It belongs to the ABC transporter superfamily. Macrolide exporter (TC 3.A.1.122) family. Part of the tripartite efflux system PvdRT-OpmQ, which is composed of an inner membrane component with both ATPase and permease domains, PvdT, a periplasmic membrane fusion protein, PvdR, and an outer membrane component, OpmQ.

The protein localises to the cell inner membrane. Part of the tripartite efflux system PvdRT-OpmQ required for the secretion into the extracellular milieu of the siderophore pyoverdine (PVD), which is involved in iron acquisition. This subunit binds PVD and drives its secretion by hydrolyzing ATP. The system is responsible for export of newly synthesized PVD after the final steps of biosynthesis have taken place in the periplasm. It is also responsible for recycling of PVD after internalization of ferri-PVD into the periplasm by the outer-membrane receptor FpvA and release of iron from PVD, thus making PVD available for new cycles of iron uptake. The sequence is that of Pyoverdine export ATP-binding/permease protein PvdT from Pseudomonas syringae pv. tomato (strain ATCC BAA-871 / DC3000).